The sequence spans 206 residues: Superoxide dismutase [Mn] (206 aa).

Residues His27, His82, Asp168, and His172 each contribute to the Mn(2+) site.

The protein belongs to the iron/manganese superoxide dismutase family. In terms of assembly, homodimer. Mn(2+) serves as cofactor.

It catalyses the reaction 2 superoxide + 2 H(+) = H2O2 + O2. Destroys superoxide anion radicals which are normally produced within the cells and which are toxic to biological systems. This is Superoxide dismutase [Mn] (sodA) from Escherichia coli O157:H7.